A 230-amino-acid chain; its full sequence is Ureidoacrylate amidohydrolase RutB (230 aa).

D24 acts as the Proton acceptor in catalysis. The active site involves K133. Residue C166 is the Nucleophile of the active site.

It belongs to the isochorismatase family. RutB subfamily.

It carries out the reaction (Z)-3-ureidoacrylate + H2O + H(+) = (Z)-3-aminoacrylate + NH4(+) + CO2. The catalysed reaction is (Z)-3-ureidoacrylate + H2O = (Z)-3-aminoacrylate + carbamate + H(+). The enzyme catalyses (Z)-2-methylureidoacrylate + H2O + H(+) = (Z)-2-methylaminoacrylate + NH4(+) + CO2. Functionally, hydrolyzes ureidoacrylate to form aminoacrylate and carbamate. The carbamate hydrolyzes spontaneously, thereby releasing one of the nitrogen atoms of the pyrimidine ring as ammonia and one of its carbon atoms as CO2. This Escherichia coli O81 (strain ED1a) protein is Ureidoacrylate amidohydrolase RutB.